The primary structure comprises 101 residues: MIPGELLPQDGDLELNAGRPTLTVTVANTGDRPVQIGSHYHFHEVNDALRFDREATRGYRLNIAAGTAVRFEPGQERTVELVALAGDRVVYGFAGRVMGKL.

It belongs to the urease beta subunit family. As to quaternary structure, heterotrimer of UreA (gamma), UreB (beta) and UreC (alpha) subunits. Three heterotrimers associate to form the active enzyme.

It localises to the cytoplasm. It carries out the reaction urea + 2 H2O + H(+) = hydrogencarbonate + 2 NH4(+). Its pathway is nitrogen metabolism; urea degradation; CO(2) and NH(3) from urea (urease route): step 1/1. In Ralstonia nicotianae (strain ATCC BAA-1114 / GMI1000) (Ralstonia solanacearum), this protein is Urease subunit beta.